We begin with the raw amino-acid sequence, 513 residues long: 2-isopropylmalate synthase (513 aa).

A Pyruvate carboxyltransferase domain is found at 4-266 (IEFFDTSLRD…KSPLVLAETM (263 aa)). Positions 13, 201, 203, and 237 each coordinate Mn(2+). Residues 390–513 (ILNNVQIDGH…VEQISAHDGI (124 aa)) are regulatory domain.

This sequence belongs to the alpha-IPM synthase/homocitrate synthase family. LeuA type 1 subfamily. Homodimer. Requires Mn(2+) as cofactor.

The protein localises to the cytoplasm. It catalyses the reaction 3-methyl-2-oxobutanoate + acetyl-CoA + H2O = (2S)-2-isopropylmalate + CoA + H(+). Its pathway is amino-acid biosynthesis; L-leucine biosynthesis; L-leucine from 3-methyl-2-oxobutanoate: step 1/4. In terms of biological role, catalyzes the condensation of the acetyl group of acetyl-CoA with 3-methyl-2-oxobutanoate (2-ketoisovalerate) to form 3-carboxy-3-hydroxy-4-methylpentanoate (2-isopropylmalate). The sequence is that of 2-isopropylmalate synthase from Lactococcus lactis subsp. cremoris (strain SK11).